Reading from the N-terminus, the 256-residue chain is Thiazole synthase (256 aa).

The active-site Schiff-base intermediate with DXP is Lys-95. 1-deoxy-D-xylulose 5-phosphate is bound by residues Gly-156, 182-183 (AG), and 204-205 (NT).

Belongs to the ThiG family. As to quaternary structure, homotetramer. Forms heterodimers with either ThiH or ThiS.

It localises to the cytoplasm. It carries out the reaction [ThiS sulfur-carrier protein]-C-terminal-Gly-aminoethanethioate + 2-iminoacetate + 1-deoxy-D-xylulose 5-phosphate = [ThiS sulfur-carrier protein]-C-terminal Gly-Gly + 2-[(2R,5Z)-2-carboxy-4-methylthiazol-5(2H)-ylidene]ethyl phosphate + 2 H2O + H(+). It functions in the pathway cofactor biosynthesis; thiamine diphosphate biosynthesis. Its function is as follows. Catalyzes the rearrangement of 1-deoxy-D-xylulose 5-phosphate (DXP) to produce the thiazole phosphate moiety of thiamine. Sulfur is provided by the thiocarboxylate moiety of the carrier protein ThiS. In vitro, sulfur can be provided by H(2)S. The polypeptide is Thiazole synthase (Escherichia coli O157:H7).